The following is a 107-amino-acid chain: High mobility group protein HMG-I/HMG-Y (107 aa).

The span at 1-13 shows a compositional bias: polar residues; sequence MSESVSKSSQPLA. Positions 1–107 are disordered; it reads MSESVSKSSQ…ISQESSEEEQ (107 aa). Residue serine 2 is modified to N-acetylserine. Lysine 7 is modified (N6-acetyllysine). Residue serine 8 is modified to ADP-ribosylserine. Serine 9 is subject to ADP-ribosylserine; alternate. Serine 9 is modified (phosphoserine; alternate). Lysine 15 bears the N6-acetyllysine; alternate mark. A Glycyl lysine isopeptide (Lys-Gly) (interchain with G-Cter in SUMO2); alternate cross-link involves residue lysine 15. Positions 15 to 24 are enriched in basic and acidic residues; it reads KQEKDGTEKR. Residues 21 to 31 constitute a DNA-binding region (a.T hook 1); the sequence is TEKRGRGRPRK. An Asymmetric dimethylarginine; alternate modification is found at arginine 26. Omega-N-methylarginine; alternate is present on arginine 26. At arginine 26 the chain carries Symmetric dimethylarginine; alternate. Phosphoserine; by HIPK2 and CDC2 is present on serine 36. Position 39 is a phosphothreonine (threonine 39). Phosphoserine is present on residues serine 44 and serine 49. Threonine 53 carries the post-translational modification Phosphothreonine; by HIPK2 and CDC2. 2 DNA-binding regions (a.T hook) span residues 53–63 and 78–89; these read TPKRPRGRPKG and TPGRKPRGRPKK. The interaction with HIPK2 stretch occupies residues 53-77; the sequence is TPKRPRGRPKGSKNKGTAKTRKVTT. Over residues 55-74 the composition is skewed to basic residues; sequence KRPRGRPKGSKNKGTAKTRK. Residues arginine 58 and arginine 60 each carry the asymmetric dimethylarginine; by PRMT6; alternate modification. Omega-N-methylarginine; by PRMT6; alternate is present on residues arginine 58 and arginine 60. Phosphothreonine; by HIPK2 and CDC2 is present on threonine 78. A compositionally biased stretch (acidic residues) spans 93–107; sequence EEEEGISQESSEEEQ. 3 positions are modified to phosphoserine: serine 99, serine 102, and serine 103.

It belongs to the HMGA family. As to quaternary structure, interacts with HIPK2. Post-translationally, isoforms HMG-I and HMG-Y can be phosphorylated by HIPK2. Phosphorylation may modulate DNA-binding affinity. Methylation at Arg-58 is mutually exclusive with methylation at Arg-60.

It localises to the nucleus. The protein localises to the chromosome. HMG-I/Y bind preferentially to the minor groove of A+T rich regions in double-stranded DNA. It is suggested that these proteins could function in nucleosome phasing and in the 3'-end processing of mRNA transcripts. They are also involved in the transcription regulation of genes containing, or in close proximity to A+T-rich regions. The chain is High mobility group protein HMG-I/HMG-Y (Hmga1) from Rattus norvegicus (Rat).